An 879-amino-acid polypeptide reads, in one-letter code: DNA double-strand break repair Rad50 ATPase (879 aa).

ATP is bound by residues 32–38 and Q139; that span reads NGAGKSS. Coiled-coil stretches lie at residues 184-304 and 342-436; these read IELQ…NKIK and EIKG…NQVK. The Zinc-hook domain occupies 394-492; it reads LQKLNEDLNN…LISELNQIIN (99 aa). Positions 440 and 443 each coordinate Zn(2+). A coiled-coil region spans residues 502–722; the sequence is IRNLADYNNL…LITAYDKLKK (221 aa). 786–791 contacts ATP; sequence LLSGGE.

The protein belongs to the SMC family. RAD50 subfamily. Homodimer. Forms a heterotetramer composed of two Mre11 subunits and two Rad50 subunits. It depends on Zn(2+) as a cofactor.

In terms of biological role, part of the Rad50/Mre11 complex, which is involved in the early steps of DNA double-strand break (DSB) repair. The complex may facilitate opening of the processed DNA ends to aid in the recruitment of HerA and NurA. Rad50 controls the balance between DNA end bridging and DNA resection via ATP-dependent structural rearrangements of the Rad50/Mre11 complex. This chain is DNA double-strand break repair Rad50 ATPase, found in Sulfurisphaera tokodaii (strain DSM 16993 / JCM 10545 / NBRC 100140 / 7) (Sulfolobus tokodaii).